The following is a 60-amino-acid chain: Large ribosomal subunit protein bL32 (60 aa).

The interval 1–44 (MAVQQNKKSRSARDMRRSHDALSENALSVEKTTGEVHLRHHVSP) is disordered. A compositionally biased stretch (basic and acidic residues) spans 11–22 (SARDMRRSHDAL).

Belongs to the bacterial ribosomal protein bL32 family.

The polypeptide is Large ribosomal subunit protein bL32 (Pseudomonas putida (strain W619)).